A 278-amino-acid polypeptide reads, in one-letter code: Sulfur carrier protein FdhD (278 aa).

Catalysis depends on Cys-121, which acts as the Cysteine persulfide intermediate. 260–265 (FCKPGR) is a Mo-bis(molybdopterin guanine dinucleotide) binding site.

It belongs to the FdhD family.

The protein localises to the cytoplasm. Required for formate dehydrogenase (FDH) activity. Acts as a sulfur carrier protein that transfers sulfur from IscS to the molybdenum cofactor prior to its insertion into FDH. The sequence is that of Sulfur carrier protein FdhD from Salmonella choleraesuis (strain SC-B67).